Consider the following 192-residue polypeptide: ATP-dependent Clp protease proteolytic subunit 1 (192 aa).

Catalysis depends on S92, which acts as the Nucleophile. H117 is a catalytic residue.

Belongs to the peptidase S14 family. As to quaternary structure, fourteen ClpP subunits assemble into 2 heptameric rings which stack back to back to give a disk-like structure with a central cavity, resembling the structure of eukaryotic proteasomes.

Its subcellular location is the cytoplasm. It catalyses the reaction Hydrolysis of proteins to small peptides in the presence of ATP and magnesium. alpha-casein is the usual test substrate. In the absence of ATP, only oligopeptides shorter than five residues are hydrolyzed (such as succinyl-Leu-Tyr-|-NHMec, and Leu-Tyr-Leu-|-Tyr-Trp, in which cleavage of the -Tyr-|-Leu- and -Tyr-|-Trp bonds also occurs).. Functionally, cleaves peptides in various proteins in a process that requires ATP hydrolysis. Has a chymotrypsin-like activity. Plays a major role in the degradation of misfolded proteins. The sequence is that of ATP-dependent Clp protease proteolytic subunit 1 from Chlamydia abortus (strain DSM 27085 / S26/3) (Chlamydophila abortus).